Consider the following 318-residue polypeptide: NADH-ubiquinone oxidoreductase chain 1 (318 aa).

A run of 8 helical transmembrane segments spans residues 2-22 (PMANLLLLIVPILIAMAFLML), 68-88 (ITLYITAPTLALTIALLLWTP), 100-120 (LGLLFILATSSLAVYSILWSG), 146-166 (LAIILLSTLLMSGSFNLSTLI), 171-191 (HLWLLLPSWPLAMMWFISTLA), 231-251 (IIMMNTLTTTIFLGTTYDALS), 253-273 (ELYTTYFVTKTLLLTSLFLWI), and 294-314 (LPLTLALLMWYVSMPITISSI).

Belongs to the complex I subunit 1 family. As to quaternary structure, core subunit of respiratory chain NADH dehydrogenase (Complex I) which is composed of 45 different subunits.

It localises to the mitochondrion inner membrane. The enzyme catalyses a ubiquinone + NADH + 5 H(+)(in) = a ubiquinol + NAD(+) + 4 H(+)(out). Functionally, core subunit of the mitochondrial membrane respiratory chain NADH dehydrogenase (Complex I) which catalyzes electron transfer from NADH through the respiratory chain, using ubiquinone as an electron acceptor. Essential for the catalytic activity and assembly of complex I. This is NADH-ubiquinone oxidoreductase chain 1 (MT-ND1) from Homo sapiens (Human).